A 65-amino-acid polypeptide reads, in one-letter code: Small, acid-soluble spore protein 2 (65 aa).

This sequence belongs to the alpha/beta-type SASP family.

Functionally, SASP are bound to spore DNA. They are double-stranded DNA-binding proteins that cause DNA to change to an a-like conformation. They protect the DNA backbone from chemical and enzymatic cleavage and are thus involved in dormant spore's high resistance to UV light. The protein is Small, acid-soluble spore protein 2 (sasP-2) of Bacillus cereus.